We begin with the raw amino-acid sequence, 547 residues long: MVTDNKTADASFESLLRIFTVPEAPDSTLGIIEKELSQNLNQFLREHIVAEEKPLTEIEKDFTDSSMPESPTYVSEHTEHLLDTLVSQSVHTSAPSFIGHMTSALPYFLMPLSKIMIALNQNLVKIETSKAFTPLERQVLGMLHRLIFGQKDSFYQHWMHSADHSLGAFCSGGTIANITALWVARNRLLKPEGDFEGIAKQGLFAALMHYKCNGLAIFVSERGHYSLKKAADVLGIGQDGVIAVKTDNNNRVCLDDLELKIAQAKAKNIKPLAIVGVAGTTETGSIDPLRELANVAQREGCHFHVDAAWGGATLMSNTYRHLLDGIDLADSVTIDAHKQLYVPMGAGMVIFKDPELMSSIQHHAEYILRKGSKDLGRHTLEGSRSGMAMLLYSCFNVISRPGYELLINQSIEKAHYFADLIQQQDDFELITEPELCLLTYRYVPSNVKAALAIATDEQKIEIYEHLDNLTKYIQKTQRETGKSFVSRTRLTPEAYQHQPTIVFRVVLANPLTTKEILQNVLIEQREIASSSEISLPLLNQIVGNILH.

Residue Lys-338 is modified to N6-(pyridoxal phosphate)lysine.

Belongs to the group II decarboxylase family. It depends on pyridoxal 5'-phosphate as a cofactor.

It carries out the reaction L-aspartate + H(+) = beta-alanine + CO2. Its pathway is cofactor biosynthesis; (R)-pantothenate biosynthesis; beta-alanine from L-aspartate: step 1/1. Functionally, catalyzes the pyridoxal-dependent decarboxylation of aspartate to produce beta-alanine. Has weak activity with glutamate. This chain is Aspartate 1-decarboxylase, found in Aliivibrio fischeri (strain ATCC 700601 / ES114) (Vibrio fischeri).